We begin with the raw amino-acid sequence, 212 residues long: Adapter protein MecA 2 (212 aa).

Belongs to the MecA family. In terms of assembly, homodimer.

Functionally, enables the recognition and targeting of unfolded and aggregated proteins to the ClpC protease or to other proteins involved in proteolysis. Acts negatively in the development of competence by binding ComK and recruiting it to the ClpCP protease. When overexpressed, inhibits sporulation. Also involved in Spx degradation by ClpC. The sequence is that of Adapter protein MecA 2 (mecA2) from Halalkalibacterium halodurans (strain ATCC BAA-125 / DSM 18197 / FERM 7344 / JCM 9153 / C-125) (Bacillus halodurans).